A 105-amino-acid chain; its full sequence is Prokineticin-1 (105 aa).

Positions 1-19 (MRGAVHIFIMLLLATASDC) are cleaved as a signal peptide. 5 disulfide bridges follow: Cys26-Cys38, Cys32-Cys50, Cys37-Cys78, Cys60-Cys86, and Cys80-Cys96.

It belongs to the AVIT (prokineticin) family. As to expression, highly expressed in liver and ovary and weakly expressed in testis and placenta. Expressed in mucosa and mesenchyme of embryonic gut during enteric nervous system development (at protein level). Predominantly expressed in kidney and liver. Also expressed in lung, ovary, placenta and testis. In fetal liver, is restricted to and highly expressed in hepatocytes. In adult kidney, expression is restricted to the endothelial tubule cells. In placenta, expressed throughout gestation.

It localises to the secreted. Functionally, potently contracts gastrointestinal (GI) smooth muscle. Induces proliferation, migration and fenestration (the formation of membrane discontinuities) in capillary endothelial cells. Induces proliferation and differentiation, but not migration, of enteric neural crest cells. Directly influences neuroblastoma progression by promoting the proliferation and migration of neuroblastoma cells. Positively regulates PTGS2 expression and prostaglandin synthesis. May play a role in placentation. May play a role in normal and pathological testis angiogenesis. The chain is Prokineticin-1 from Mus musculus (Mouse).